The primary structure comprises 335 residues: Glycerol-3-phosphate dehydrogenase [NAD(P)+] (335 aa).

Ser15, Tyr16, His36, and Lys110 together coordinate NADPH. Sn-glycerol 3-phosphate contacts are provided by Lys110, Gly139, and Thr141. Ala143 is a binding site for NADPH. Lys195, Asp248, Ser258, Arg259, and Asn260 together coordinate sn-glycerol 3-phosphate. Lys195 serves as the catalytic Proton acceptor. An NADPH-binding site is contributed by Arg259. Residues Val283 and Glu285 each contribute to the NADPH site.

Belongs to the NAD-dependent glycerol-3-phosphate dehydrogenase family.

The protein localises to the cytoplasm. It catalyses the reaction sn-glycerol 3-phosphate + NAD(+) = dihydroxyacetone phosphate + NADH + H(+). It carries out the reaction sn-glycerol 3-phosphate + NADP(+) = dihydroxyacetone phosphate + NADPH + H(+). Its pathway is membrane lipid metabolism; glycerophospholipid metabolism. In terms of biological role, catalyzes the reduction of the glycolytic intermediate dihydroxyacetone phosphate (DHAP) to sn-glycerol 3-phosphate (G3P), the key precursor for phospholipid synthesis. This Haemophilus influenzae (strain 86-028NP) protein is Glycerol-3-phosphate dehydrogenase [NAD(P)+].